A 92-amino-acid polypeptide reads, in one-letter code: MQITDVRIRKISSEGKMKAIVSVTFDNEFVVHDIKVIEGQNGLFIAMPSRKTPTGEFKDIAHPIVMDSREKIQNEILSAYAKAIEEQDVEEE.

The protein belongs to the SpoVG family.

Functionally, could be involved in septation. In Clostridium botulinum (strain Eklund 17B / Type B), this protein is Putative septation protein SpoVG.